A 393-amino-acid chain; its full sequence is Major outer membrane porin, serovar L1 (393 aa).

Positions 1–22 (MKKLLKSVLVFAALSSASSLQA) are cleaved as a signal peptide.

The protein belongs to the chlamydial porin (CP) (TC 1.B.2) family. As to quaternary structure, part of a disulfide cross-linked outer membrane complex (COMC) composed of the major outer membrane porin (MOMP), the small cysteine-rich protein (OmcA) and the large cysteine-rich periplasmic protein (OmcB).

The protein resides in the cell outer membrane. In elementary bodies (EBs, the infectious stage, which is able to survive outside the host cell) provides the structural integrity of the outer envelope through disulfide cross-links with the small cysteine-rich protein and the large cysteine-rich periplasmic protein. It has been described in publications as the Sarkosyl-insoluble COMC (Chlamydia outer membrane complex), and serves as the functional equivalent of peptidoglycan. In terms of biological role, permits diffusion of specific solutes through the outer membrane. This chain is Major outer membrane porin, serovar L1 (ompA), found in Chlamydia trachomatis.